The sequence spans 119 residues: Odin profilin (119 aa).

The protein belongs to the Asgard profilin family.

It is found in the cytoplasm. The protein localises to the cytoskeleton. Its activity is regulated as follows. Inhibition of rabbit actin polymerization is reduced by phosphatidylinositol-(4,5)-P2(1,2-dipalmitoyl), a soluble form of the phospholipid phosphatidylinositol, suggesting an unknown lipid might regulate actin-profilin interaction in vivo. In terms of biological role, binds to actin and affects the structure of the cytoskeleton. At high concentrations inhibits spontaneous rabbit actin nucleation. This strongly suggests this archaea has a profilin-regulated actin system, and actin-type genes can be identified in this organism. The chain is Odin profilin from Odinarchaeota yellowstonii (strain LCB_4).